A 150-amino-acid polypeptide reads, in one-letter code: Snaclec bothrojaracin subunit beta (150 aa).

Residues 1–23 (MGRFIFVSFGLLVVFLSLSGTAA) form the signal peptide. Cystine bridges form between Cys-25-Cys-36, Cys-53-Cys-146, and Cys-123-Cys-138. The C-type lectin domain maps to 32 to 147 (YEGSCYRVFE…CTKLEYFVCE (116 aa)).

It belongs to the snaclec family. In terms of assembly, heterodimer of subunits alpha and beta; disulfide-linked. As to expression, expressed by the venom gland.

It localises to the secreted. This potent antithrombotic agent acts in a calcium-independent manner. Exerts its anticoagulant effect by two distinct mechanisms. It binds to activated thrombin through exosite 1, blocking fibrinogen clotting, platelet activation, factor V activation and other effects, and it interacts with prothrombin (F2), decreasing its proteolytic activation -especially in the presence of factor Va. In vivo, intravenous injection before thrombosis induction causes a significant decrease in thrombus weight. Furthermore, BJC shows a prolonged effect by remaining in the plasma bound to prothrombin for at least 12 hours. In Bothrops jararaca (Jararaca), this protein is Snaclec bothrojaracin subunit beta.